We begin with the raw amino-acid sequence, 311 residues long: Bifunctional protein FolD (311 aa).

Gly174–Gly176 provides a ligand contact to NADP(+).

The protein belongs to the tetrahydrofolate dehydrogenase/cyclohydrolase family. Homodimer.

The catalysed reaction is (6R)-5,10-methylene-5,6,7,8-tetrahydrofolate + NADP(+) = (6R)-5,10-methenyltetrahydrofolate + NADPH. It catalyses the reaction (6R)-5,10-methenyltetrahydrofolate + H2O = (6R)-10-formyltetrahydrofolate + H(+). It participates in one-carbon metabolism; tetrahydrofolate interconversion. Its function is as follows. Catalyzes the oxidation of 5,10-methylenetetrahydrofolate to 5,10-methenyltetrahydrofolate and then the hydrolysis of 5,10-methenyltetrahydrofolate to 10-formyltetrahydrofolate. In Pyrobaculum arsenaticum (strain DSM 13514 / JCM 11321 / PZ6), this protein is Bifunctional protein FolD.